Here is a 545-residue protein sequence, read N- to C-terminus: MSYSIGIDYGTASGRVFLINTTNGQVVSKFVKPYTHGVIESELNGLKIPHTYALQNSNDYLEIMEEGISYIVRESKIDPVNIVGIGIDFTSSTIIFTDENLNPVHNLKQFKNNPHAYVKLWKHHGAYKEAEKLYQTAIENNNKWLGHYGYNVSSEWMIPKIMEVMNRAPEIMEKTAYIMEAGDWIVNKLTNKNVRSNCGLGFKAFWEEETGFHYDLFDKIDPKLSKVIQDKVSAPVVNIGEVVGKLDDKMAQKLGLSKETMVSPFIIDAHASLLGIGSEKDKEMTMVMGTSTCHLMLNEKQHQVPGISGSVKGAIIPELFAYEAGQSAVGDLFEYVAKQAPKSYVDEAANRNMTVFELMNEKIKHQMPGESGLIALDWHNGNRSVLSDSNLTGCIFGLTLQTKHEDIYRAYLEATAFGTKMIMQQYQDWHMEVEKVFACGGIPKKNAVMMDIYANVLNKKLIVMDSEYAPAIGAAILGAVSGGAHNSINDAVDAMKEPILYEINPEAEKVQRYETLFKAYKALHDIHGYKKANIMKDIQSLRVEG.

Belongs to the ribulokinase family.

It catalyses the reaction D-ribulose + ATP = D-ribulose 5-phosphate + ADP + H(+). It carries out the reaction L-ribulose + ATP = L-ribulose 5-phosphate + ADP + H(+). Its pathway is carbohydrate degradation; L-arabinose degradation via L-ribulose; D-xylulose 5-phosphate from L-arabinose (bacterial route): step 2/3. The sequence is that of Ribulokinase from Staphylococcus aureus (strain Mu3 / ATCC 700698).